The chain runs to 262 residues: MEDILLVIDIGNTNIVLGIFKDDELIFEWRISTDLHKTSDEYALTLRQALEYSNVKKSDVKEAIIGSVVPNLMPTIPKAVKKYLGIEPLIVDEKIKTGIVNKYASPKEVGVDRIINAVSACKKYSTPVIIVDIGTAITFDYITENKEYLGGAIAPGIAISSEALFMKTAKLPKIEIEMPDSVIGDSTVKSMQSGVVFGFIGLIDYIIEKILEEKDKTKDEVTIIATGGFSYLIAKQSKYITIIDKLITLDGLKIINDLNKND.

9–16 (DIGNTNIV) lines the ATP pocket. Residues Tyr-103 and 110-113 (GVDR) contribute to the substrate site. The Proton acceptor role is filled by Asp-112. K(+) is bound at residue Asp-132. Thr-135 is an ATP binding site. Thr-187 provides a ligand contact to substrate.

The protein belongs to the type III pantothenate kinase family. Homodimer. Requires NH4(+) as cofactor. It depends on K(+) as a cofactor.

The protein localises to the cytoplasm. It carries out the reaction (R)-pantothenate + ATP = (R)-4'-phosphopantothenate + ADP + H(+). Its pathway is cofactor biosynthesis; coenzyme A biosynthesis; CoA from (R)-pantothenate: step 1/5. In terms of biological role, catalyzes the phosphorylation of pantothenate (Pan), the first step in CoA biosynthesis. This chain is Type III pantothenate kinase, found in Finegoldia magna (strain ATCC 29328 / DSM 20472 / WAL 2508) (Peptostreptococcus magnus).